We begin with the raw amino-acid sequence, 308 residues long: Polyketide transferase claH (308 aa).

The interval 50 to 280 is abhydrolase domain; that stretch reads SDIAVYFSQQ…RVEVAAGKSH (231 aa).

This sequence belongs to the polyketide transferase af380 family.

The protein operates within secondary metabolite biosynthesis. Its function is as follows. Polyketide transferase; part of the cla gene cluster that produces clavatol and ortho-quinone methide. The clavatol biosynthesis cluster cla and the terrestric acid cluster tra are both involved in the production of peniphenones and penilactones. The non-reducing PKS claF is responsible for the formation of clavatol from successive condensations of 3 malonyl-CoA units, presumably with a simple acetyl-CoA starter unit, and 2 methylation steps. The esterase claE probably collaborates with claF by catalyzing the hydrolysis of ACP-bound acyl intermediates to free the ACP from stalled intermediates. The clavatol oxidase claD then converts clavatol to hydroxyclavatol. Spontaneous dehydration of hydroxyclavatol leads to the accumulation of the highly active ortho-quinone methide. On the other hand, the PKS-NRPS hybrid traA is involved in the formation of crustosic acid, with the help of traB and traD. The polyketide synthase module (PKS) of traA is responsible for the synthesis of the polyketide backbone via the condensation of an acetyl-CoA starter unit with 3 malonyl-CoA units. The downstream nonribosomal peptide synthetase (NRPS) module then amidates the carboxyl end of the polyketide with L-malic acid. Because traA lacks a designated enoylreductase (ER) domain, the required activity is provided the enoyl reductase traG. Crustosic acid undergoes decarboxylation and isomerization to the terrestric acid, catalyzed by the 2-oxoglutarate-dependent dioxygenase traH. Both acids are further converted to the 2 gamma-butyrolactones (R)-5-methyltetronic acid and (S)-5-carboxylmethyltetronic acid, with involvement of the cytochrome P450 monooxygenase claJ. Spontaneous addition of the methide to these gamma-butyrolactones leads to peniphenone D and penilactone D, which undergo again stereospecific attacking by methide to give penilactones A and B. The function of the polyketide transferase claH has not been investigated yet. This Penicillium crustosum (Blue mold fungus) protein is Polyketide transferase claH.